A 61-amino-acid polypeptide reads, in one-letter code: Large ribosomal subunit protein uL30 (61 aa).

This sequence belongs to the universal ribosomal protein uL30 family. Part of the 50S ribosomal subunit.

The polypeptide is Large ribosomal subunit protein uL30 (Bifidobacterium adolescentis (strain ATCC 15703 / DSM 20083 / NCTC 11814 / E194a)).